The sequence spans 668 residues: DNA ligase (668 aa).

Residues 37 to 41, 86 to 87, and Glu-116 each bind NAD(+); these read DAIYD and SL. Lys-118 functions as the N6-AMP-lysine intermediate in the catalytic mechanism. Residues Arg-139, Glu-176, Lys-289, and Lys-313 each contribute to the NAD(+) site. The Zn(2+) site is built by Cys-407, Cys-410, Cys-425, and Cys-430. One can recognise a BRCT domain in the interval 586-668; sequence AQSSALAGLT…RALIETREMP (83 aa).

It belongs to the NAD-dependent DNA ligase family. LigA subfamily. Mg(2+) is required as a cofactor. Mn(2+) serves as cofactor.

The catalysed reaction is NAD(+) + (deoxyribonucleotide)n-3'-hydroxyl + 5'-phospho-(deoxyribonucleotide)m = (deoxyribonucleotide)n+m + AMP + beta-nicotinamide D-nucleotide.. In terms of biological role, DNA ligase that catalyzes the formation of phosphodiester linkages between 5'-phosphoryl and 3'-hydroxyl groups in double-stranded DNA using NAD as a coenzyme and as the energy source for the reaction. It is essential for DNA replication and repair of damaged DNA. The polypeptide is DNA ligase (Gloeobacter violaceus (strain ATCC 29082 / PCC 7421)).